The primary structure comprises 615 residues: Isocitrate dehydrogenase kinase/phosphatase (615 aa).

ATP-binding positions include Ala-325–Met-331 and Lys-346. The active site involves Asp-381.

This sequence belongs to the AceK family.

The protein localises to the cytoplasm. It catalyses the reaction L-seryl-[isocitrate dehydrogenase] + ATP = O-phospho-L-seryl-[isocitrate dehydrogenase] + ADP + H(+). Its function is as follows. Bifunctional enzyme which can phosphorylate or dephosphorylate isocitrate dehydrogenase (IDH) on a specific serine residue. This is a regulatory mechanism which enables bacteria to bypass the Krebs cycle via the glyoxylate shunt in response to the source of carbon. When bacteria are grown on glucose, IDH is fully active and unphosphorylated, but when grown on acetate or ethanol, the activity of IDH declines drastically concomitant with its phosphorylation. This is Isocitrate dehydrogenase kinase/phosphatase from Albidiferax ferrireducens (strain ATCC BAA-621 / DSM 15236 / T118) (Rhodoferax ferrireducens).